We begin with the raw amino-acid sequence, 676 residues long: Protein cereblon (676 aa).

Acidic residues predominate over residues M1 to E11. Disordered regions lie at residues M1 to H78, E118 to R194, and D249 to D276. Low complexity-rich tracts occupy residues T12 to A33 and V125 to A139. Residues L156 to S177 are compositionally biased toward polar residues. A Lon N-terminal domain is found at R314 to S542. The 110-residue stretch at E541–K650 folds into the CULT domain. Residues C546, C549, C615, and C618 each contribute to the Zn(2+) site.

Belongs to the CRBN family. As to quaternary structure, likely a component of a DCX (DDB1-CUL4-X-box) protein ligase complex. May interact with pic/DDB1. Post-translationally, ubiquitinated.

The protein resides in the nucleus. It participates in protein modification; protein ubiquitination. In terms of biological role, substrate recognition component of a DCX (DDB1-CUL4-X-box) E3 protein ligase complex that mediates the ubiquitination and subsequent proteasomal degradation of target proteins. Has an essential role in mediating growth by negatively regulating insulin signaling. It also has a role in maintaining presynaptic function in the neuromuscular junction synapses of third-instar larvae. In Drosophila mojavensis (Fruit fly), this protein is Protein cereblon.